The chain runs to 385 residues: MELQEVLRMNGGEGDTSYAKNSAYNHLVLNKVKPVLEQCIRELLRASLPNINKCIKVADLGCASGPNTLLTVRDIVQSIDKVGQEKKNELERPTIQIFLNDLFQNDFNSVFKLLPSFYRKLEKENGRKIGSCLIGAMPGSFYSRLFPEESMHFLHSCYCLHWLSQVPSGLVTELGISTNKGSIYSSKASRLPVQKAYLDQFTKDFTTFLRIHSEELFSHGRMLLTCICKGVEFDALNAIDLLEMAINDLVVEGHLEEEKLDSFNLPVYIPSAEEVKCIVEEEGSFEILYLETFKVLYDAGFSIDDNYPVRSHVQVYSDEHIKAEYVASSVRAVYEPILASHFGEAIIPDIFHRFAKHAAKVLPLGKAYYNNLIISLAKKPEKSDM.

Y18 is an S-adenosyl-L-homocysteine binding site. 2 residues coordinate xanthosine: N21 and N25. S-adenosyl-L-homocysteine is bound by residues C62, N67, D101, L102, S140, F141, and C157. Xanthosine is bound at residue Y158. C159 is a binding site for S-adenosyl-L-homocysteine. The xanthosine site is built by H161 and W162. Mg(2+) contacts are provided by N179, D261, F263, and N264. Positions 329, 334, and 369 each coordinate xanthosine.

The protein belongs to the methyltransferase superfamily. Type-7 methyltransferase family. Mg(2+) is required as a cofactor. As to expression, expressed at low levels in young leaves but not in mature leaves. Barely detectable in fruits (grains).

It catalyses the reaction xanthosine + S-adenosyl-L-methionine = 7-methylxanthosine + S-adenosyl-L-homocysteine. Its pathway is alkaloid biosynthesis. Its function is as follows. Involved in the biosynthesis of caffeine. Specific for xanthosine and could not use xanthosine 5'-monophosphate (XMP) as substrate. Catalyzes the 7-N-methylation activity of xanthosine, but does not have 1-N- or 3-N-methylation activity. The chain is Xanthosine methyltransferase 2 from Coffea arabica (Arabian coffee).